The primary structure comprises 422 residues: Elongation factor 1-alpha (422 aa).

A tr-type G domain is found at 5-221 (KPHMNLAVIG…NNLKVPEKPS (217 aa)). The G1 stretch occupies residues 14–21 (GHIDHGKS). Residue 14–21 (GHIDHGKS) coordinates GTP. Residue Ser21 coordinates Mg(2+). Residues 70–74 (GITID) are G2. Residues 91 to 94 (DCPG) form a G3 region. Residues 91–95 (DCPGH) and 146–149 (NKMD) contribute to the GTP site. Residues 146–149 (NKMD) are G4. Residues 185–187 (SAF) are G5.

It belongs to the TRAFAC class translation factor GTPase superfamily. Classic translation factor GTPase family. EF-Tu/EF-1A subfamily.

The protein resides in the cytoplasm. It catalyses the reaction GTP + H2O = GDP + phosphate + H(+). Its function is as follows. GTP hydrolase that promotes the GTP-dependent binding of aminoacyl-tRNA to the A-site of ribosomes during protein biosynthesis. This is Elongation factor 1-alpha from Methanosarcina barkeri (strain Fusaro / DSM 804).